Reading from the N-terminus, the 231-residue chain is Equistatin (231 aa).

An N-terminal signal peptide occupies residues 1 to 32; sequence MALSQNQAKFSKGFVVMIWVLFIACAITSTEA. 3 consecutive Thyroglobulin type-1 domains span residues 34-95, 102-163, and 167-231; these read LTKC…SPDC, LTLC…RPTC, and LSEC…RPTC. Cystine bridges form between C37/C56, C67/C74, C76/C95, C105/C124, C135/C142, C144/C163, C170/C191, C202/C209, and C211/C231.

The protein belongs to the protease inhibitor I31 family.

It localises to the secreted. Potent inhibitor of papain-like cysteine proteinases (Ki=0.18-0.57 nM on papain), as well as of the aspartic proteinase cathepsin D (Ki=0.3-05 nM). The chain is Equistatin from Actinia equina (Beadlet anemone).